The primary structure comprises 791 residues: MSRRRHSDENDGGQPHKRRRTSEPLEIEDRLESLICRVGEKSTSSLESNLEGLAGVLEADLPNYKNKILRILCFVARLLPEKMTVYTTLVGLLNARNYNFGGEFVEAMIRHLKETIKLNAYNEAIYLVRFLCDLVNCHVIAAPSMVAMFESFVGVTQEEDIPQVRSDWYVYAVLSSLPWVGKELYEKKDVEMDQILSQIEAYLKQRQKLHLSILQVWSAEKPHPQEEYLDCLWAQVQKLKKDRWQERHIQRPYLAFDSVLCEALQHNLPPFTPPPHTEDSVYPVPRVIFRMFDYTDAPEGPVMPGSHSVERFVIEENLHCILKSHWRERKTCAAQLLSYPEKNKIPLNYHIVEVIFGELFQLPSPPQIDVMYTTLLIELCKLQPGSLPQVLAQASEMLYTRLDTMNTTCIDRFINWFSHHLSNFQFRWNWEDWADCLSQDLDKPKPQFVREVLEKCMRLSYHQRILDIVPATFSALYPANPSNVIKYGDESNSALPGYSVAVILTNAIKNKASDKEIFNILKDIPNPNQDDYDDEGIGFNPLKIEVFVQTLLNLASKSFSHSFSALAKFHDIFKALSESDEGKLHILRVVYDVWKNHPQMIAVLLDKMIRTQIVDCAAVANWIFSPELSPDFTRFYIWEILHSTIRKMNKHVQKIQKELEDTKQRLAKQHKHRDSDDNDEDSGRKDGPLEEQIERLQEKVESAQSEQKNLFLVIFQRFIMILTEHLVRCETGGIDVNTAWYKNCRERLQQIFLQHHQTIQQYMVTLENLLFTAELDHHILTVFQQFCALQS.

A disordered region spans residues 1 to 24 (MSRRRHSDENDGGQPHKRRRTSEP). The MIF4G domain occupies 28–240 (EDRLESLICR…CLWAQVQKLK (213 aa)). Residues 641–714 (LHSTIRKMNK…SEQKNLFLVI (74 aa)) adopt a coiled-coil conformation. The segment at 664-687 (QRLAKQHKHRDSDDNDEDSGRKDG) is disordered.

It belongs to the NCBP1 family. Component of the nuclear cap-binding complex (CBC), a heterodimer composed of ncbp1/cbp80 and ncbp2/cbp20 that interacts with m7GpppG-capped RNA. Component of an alternative nuclear cap-binding complex (CBC) composed of ncbp1/cbp80 and ncbp3.

The protein resides in the nucleus. It is found in the cytoplasm. Its function is as follows. Component of the cap-binding complex (CBC), which binds cotranscriptionally to the 5'-cap of pre-mRNAs and is involved in various processes such as pre-mRNA splicing, translation regulation, nonsense-mediated mRNA decay, RNA-mediated gene silencing (RNAi) by microRNAs (miRNAs) and mRNA export. The CBC complex is involved in mRNA export from the nucleus, leading to the recruitment of the mRNA export machinery to the 5'-end of mRNA and to mRNA export in a 5' to 3' direction through the nuclear pore. The CBC complex is also involved in mediating U snRNA and intronless mRNAs export from the nucleus. The CBC complex is essential for a pioneer round of mRNA translation, before steady state translation when the CBC complex is replaced by cytoplasmic cap-binding protein eIF4E. The pioneer round of mRNA translation mediated by the CBC complex plays a central role in nonsense-mediated mRNA decay (NMD), NMD only taking place in mRNAs bound to the CBC complex, but not on eIF4E-bound mRNAs. The CBC complex enhances NMD in mRNAs containing at least one exon-junction complex (EJC), promoting the interaction between UPF1 and UPF2. The CBC complex is also involved in 'failsafe' NMD, which is independent of the EJC complex, while it does not participate in Staufen-mediated mRNA decay (SMD). During cell proliferation, the CBC complex is also involved in microRNAs (miRNAs) biogenesis via its interaction with SRRT/ARS2 and is required for miRNA-mediated RNA interference. The CBC complex also acts as a negative regulator of parn, thereby acting as an inhibitor of mRNA deadenylation. In the CBC complex, NCBP1/CBP80 does not bind directly capped RNAs (m7GpppG-capped RNA) but is required to stabilize the movement of the N-terminal loop of NCBP2/CBP20 and lock the CBC into a high affinity cap-binding state with the cap structure. Associates with NCBP3 to form an alternative cap-binding complex (CBC) which plays a key role in mRNA export. The conventional CBC with NCBP2 binds both small nuclear RNA (snRNA) and messenger (mRNA) and is involved in their export from the nucleus whereas the alternative CBC with NCBP3 does not bind snRNA and associates only with mRNA thereby playing a role only in mRNA export. This chain is Nuclear cap-binding protein subunit 1-B (ncbp1-b), found in Xenopus laevis (African clawed frog).